Reading from the N-terminus, the 277-residue chain is Shikimate dehydrogenase (NADP(+)) (277 aa).

Residues 18-20 (SKS) and Thr65 contribute to the shikimate site. Residue Lys69 is the Proton acceptor of the active site. Glu81 contacts NADP(+). Residues Asn90 and Asp106 each contribute to the shikimate site. NADP(+) is bound by residues 130–134 (GAGGA), 154–159 (NRTFSK), and Met217. Position 219 (Tyr219) interacts with shikimate. Gly241 contributes to the NADP(+) binding site.

This sequence belongs to the shikimate dehydrogenase family. In terms of assembly, homodimer.

It carries out the reaction shikimate + NADP(+) = 3-dehydroshikimate + NADPH + H(+). Its pathway is metabolic intermediate biosynthesis; chorismate biosynthesis; chorismate from D-erythrose 4-phosphate and phosphoenolpyruvate: step 4/7. In terms of biological role, involved in the biosynthesis of the chorismate, which leads to the biosynthesis of aromatic amino acids. Catalyzes the reversible NADPH linked reduction of 3-dehydroshikimate (DHSA) to yield shikimate (SA). This Vibrio vulnificus (strain CMCP6) protein is Shikimate dehydrogenase (NADP(+)).